Consider the following 59-residue polypeptide: Probable stress-associated endoplasmic reticulum protein (59 aa).

Residues 1 to 30 (MSQSRTLRQKSQKYQENIEKRGVASPKKKE) are disordered. Residues 1 to 34 (MSQSRTLRQKSQKYQENIEKRGVASPKKKEDGLN) are Cytoplasmic-facing. Residues 16–30 (ENIEKRGVASPKKKE) show a composition bias toward basic and acidic residues. The helical; Anchor for type IV membrane protein transmembrane segment at 35–55 (INPYVLGFIIFVVVGSTLLQI) threads the bilayer. Residues 56 to 59 (LKGQ) are Extracellular-facing.

It belongs to the RAMP4 family.

The protein resides in the membrane. It localises to the endoplasmic reticulum membrane. May interact with target proteins during translocation into the lumen of the endoplasmic reticulum. May protect unfolded target proteins against degradation and facilitate correct glycosylation. The sequence is that of Probable stress-associated endoplasmic reticulum protein (serp) from Dictyostelium discoideum (Social amoeba).